A 165-amino-acid polypeptide reads, in one-letter code: Cytochrome c-type biogenesis protein CcmE (165 aa).

At 1–29 (MSATAEQNARNPKGKGGFARTVSQRKRKR) the chain is on the cytoplasmic side. The helical; Signal-anchor for type II membrane protein transmembrane segment at 30–50 (LFLIGGALAVLAVAVGLMLTA) threads the bilayer. The Periplasmic segment spans residues 51–165 (FNQDIRFFRT…LKKKGVWEGK (115 aa)). 2 residues coordinate heme: His-143 and Tyr-147.

This sequence belongs to the CcmE/CycJ family.

Its subcellular location is the cell inner membrane. Heme chaperone required for the biogenesis of c-type cytochromes. Transiently binds heme delivered by CcmC and transfers the heme to apo-cytochromes in a process facilitated by CcmF and CcmH. This is Cytochrome c-type biogenesis protein CcmE from Brucella canis (strain ATCC 23365 / NCTC 10854 / RM-666).